The following is a 413-amino-acid chain: Multifunctional CCA protein (413 aa).

Glycine 8 and arginine 11 together coordinate ATP. Residues glycine 8 and arginine 11 each coordinate CTP. Residues aspartate 21 and aspartate 23 each coordinate Mg(2+). ATP contacts are provided by arginine 91, arginine 143, and arginine 146. Residues arginine 91, arginine 143, and arginine 146 each coordinate CTP. Residues 232–333 (TGVHVMMVVD…VRFFERSDAL (102 aa)) form the HD domain.

It belongs to the tRNA nucleotidyltransferase/poly(A) polymerase family. Bacterial CCA-adding enzyme type 1 subfamily. In terms of assembly, monomer. Can also form homodimers and oligomers. Mg(2+) serves as cofactor. The cofactor is Ni(2+).

The enzyme catalyses a tRNA precursor + 2 CTP + ATP = a tRNA with a 3' CCA end + 3 diphosphate. It catalyses the reaction a tRNA with a 3' CCA end + 2 CTP + ATP = a tRNA with a 3' CCACCA end + 3 diphosphate. Functionally, catalyzes the addition and repair of the essential 3'-terminal CCA sequence in tRNAs without using a nucleic acid template. Adds these three nucleotides in the order of C, C, and A to the tRNA nucleotide-73, using CTP and ATP as substrates and producing inorganic pyrophosphate. tRNA 3'-terminal CCA addition is required both for tRNA processing and repair. Also involved in tRNA surveillance by mediating tandem CCA addition to generate a CCACCA at the 3' terminus of unstable tRNAs. While stable tRNAs receive only 3'-terminal CCA, unstable tRNAs are marked with CCACCA and rapidly degraded. In Burkholderia ambifaria (strain MC40-6), this protein is Multifunctional CCA protein.